The primary structure comprises 314 residues: DNA-directed RNA polymerase subunit alpha (314 aa).

An alpha N-terminal domain (alpha-NTD) region spans residues 1 to 228 (MIEFEKPNIH…DHLSIFVNLT (228 aa)). Positions 245 to 314 (KEKMLEMTIE…DLGLSLRKED (70 aa)) are alpha C-terminal domain (alpha-CTD).

It belongs to the RNA polymerase alpha chain family. As to quaternary structure, homodimer. The RNAP catalytic core consists of 2 alpha, 1 beta, 1 beta' and 1 omega subunit. When a sigma factor is associated with the core the holoenzyme is formed, which can initiate transcription.

The enzyme catalyses RNA(n) + a ribonucleoside 5'-triphosphate = RNA(n+1) + diphosphate. In terms of biological role, DNA-dependent RNA polymerase catalyzes the transcription of DNA into RNA using the four ribonucleoside triphosphates as substrates. The protein is DNA-directed RNA polymerase subunit alpha of Lactiplantibacillus plantarum (strain ATCC BAA-793 / NCIMB 8826 / WCFS1) (Lactobacillus plantarum).